We begin with the raw amino-acid sequence, 108 residues long: MTIMSSLAGAGRGVVNTIGGAAQGINSVKSSADRNAALVSNTGSTDSIDATRSSISKGDAKSAELDGTANEENGLLRESSMLAGFEDKKEALSNQIVASKIRNSVVQF.

Over residues 41–56 the composition is skewed to polar residues; sequence NTGSTDSIDATRSSIS. The disordered stretch occupies residues 41–73; that stretch reads NTGSTDSIDATRSSISKGDAKSAELDGTANEEN.

The protein belongs to the HrpA type 1 family.

It is found in the secreted. It localises to the fimbrium. Its function is as follows. Major structural protein of the hrp pilus, which is a component of the type III secretion system (T3SS, Hrp secretion system) required for effector protein delivery, parasitism, and pathogenicity. The hrp pilus functions as a conduit for protein delivery into the host cell. Also, affects the expression of T3SS-associated genes. Required for full expression of genes that encode regulatory, secretion, and effector proteins of the T3SS. HrpA-mediated gene regulation apparently is through effect on the mRNA level of HrpR and HrpS. This Pseudomonas syringae pv. syringae protein is Hrp pili protein HrpA (hrpA).